The chain runs to 261 residues: Putative phosphite transport system permease protein HtxE (261 aa).

Positions 47 to 253 (EATTETVEVL…VFVFVLDQLQ (207 aa)) constitute an ABC transmembrane type-1 domain. The next 3 membrane-spanning stretches (helical) occupy residues 122 to 142 (LIVALFLVLAYGFGPIAGVLA), 203 to 220 (RNLRMATVIGLVGAGGIG), and 229 to 249 (MFQYGHVMTILIAIFVFVFVL).

This sequence belongs to the binding-protein-dependent transport system permease family.

It localises to the cell inner membrane. Functionally, probably forms part of a binding-protein-dependent hypophosphite transporter. The chain is Putative phosphite transport system permease protein HtxE (htxE) from Stutzerimonas stutzeri (Pseudomonas stutzeri).